The primary structure comprises 154 residues: Lipoprotein signal peptidase (154 aa).

3 helical membrane-spanning segments follow: residues 4-24 (IIIP…KLWI), 62-82 (LFTL…MKHI), and 84-104 (GSYW…GNFI). Active-site residues include Asp-114 and Asp-130. A helical transmembrane segment spans residues 125 to 145 (IFNVADSYLTIGIICLMIALW).

This sequence belongs to the peptidase A8 family.

It is found in the cell membrane. The catalysed reaction is Release of signal peptides from bacterial membrane prolipoproteins. Hydrolyzes -Xaa-Yaa-Zaa-|-(S,diacylglyceryl)Cys-, in which Xaa is hydrophobic (preferably Leu), and Yaa (Ala or Ser) and Zaa (Gly or Ala) have small, neutral side chains.. The protein operates within protein modification; lipoprotein biosynthesis (signal peptide cleavage). In terms of biological role, this protein specifically catalyzes the removal of signal peptides from prolipoproteins. In Streptococcus agalactiae serotype Ia (strain ATCC 27591 / A909 / CDC SS700), this protein is Lipoprotein signal peptidase.